The following is a 74-amino-acid chain: Invertase 3 (74 aa).

The first 19 residues, 1 to 19 (MLLQAFIFLLAGFAAKISA), serve as a signal peptide directing secretion. The N-linked (GlcNAc...) asparagine glycan is linked to asparagine 23. Substrate-binding positions include 39–42 (WMND) and glutamine 60. Residue aspartate 42 is part of the active site. Residue asparagine 64 is glycosylated (N-linked (GlcNAc...) asparagine).

This sequence belongs to the glycosyl hydrolase 32 family.

It catalyses the reaction Hydrolysis of terminal non-reducing beta-D-fructofuranoside residues in beta-D-fructofuranosides.. The sequence is that of Invertase 3 (SUC3) from Saccharomyces cerevisiae (Baker's yeast).